The chain runs to 434 residues: 3-phosphoshikimate 1-carboxyvinyltransferase (434 aa).

Residues Lys-22, Ser-23, and Arg-27 each contribute to the 3-phosphoshikimate site. Lys-22 provides a ligand contact to phosphoenolpyruvate. Positions 94 and 122 each coordinate phosphoenolpyruvate. Residues Ser-169, Ser-170, Gln-171, Ser-199, Asp-320, and Lys-347 each contribute to the 3-phosphoshikimate site. Gln-171 provides a ligand contact to phosphoenolpyruvate. Residue Asp-320 is the Proton acceptor of the active site. Positions 351, 395, and 420 each coordinate phosphoenolpyruvate.

It belongs to the EPSP synthase family. Monomer.

It localises to the cytoplasm. It catalyses the reaction 3-phosphoshikimate + phosphoenolpyruvate = 5-O-(1-carboxyvinyl)-3-phosphoshikimate + phosphate. It functions in the pathway metabolic intermediate biosynthesis; chorismate biosynthesis; chorismate from D-erythrose 4-phosphate and phosphoenolpyruvate: step 6/7. Catalyzes the transfer of the enolpyruvyl moiety of phosphoenolpyruvate (PEP) to the 5-hydroxyl of shikimate-3-phosphate (S3P) to produce enolpyruvyl shikimate-3-phosphate and inorganic phosphate. In Ralstonia pickettii (strain 12J), this protein is 3-phosphoshikimate 1-carboxyvinyltransferase.